A 226-amino-acid chain; its full sequence is 7-cyano-7-deazaguanine synthase (226 aa).

An ATP-binding site is contributed by 10–20; sequence LSGGLDSATAA. Zn(2+)-binding residues include cysteine 191, cysteine 199, cysteine 202, and cysteine 205.

Belongs to the QueC family. Zn(2+) serves as cofactor.

It carries out the reaction 7-carboxy-7-deazaguanine + NH4(+) + ATP = 7-cyano-7-deazaguanine + ADP + phosphate + H2O + H(+). The protein operates within purine metabolism; 7-cyano-7-deazaguanine biosynthesis. Functionally, catalyzes the ATP-dependent conversion of 7-carboxy-7-deazaguanine (CDG) to 7-cyano-7-deazaguanine (preQ(0)). This Synechococcus sp. (strain CC9902) protein is 7-cyano-7-deazaguanine synthase.